Consider the following 152-residue polypeptide: Transcriptional regulator MraZ (152 aa).

2 consecutive SpoVT-AbrB domains span residues 5-52 (ATMV…PLPE) and 81-124 (ASEC…DEQT).

It belongs to the MraZ family. As to quaternary structure, forms oligomers.

The protein resides in the cytoplasm. Its subcellular location is the nucleoid. Functionally, negatively regulates its own expression and that of the subsequent genes in the proximal part of the division and cell wall (dcw) gene cluster. Acts by binding directly to DNA. May also regulate the expression of genes outside the dcw cluster. The protein is Transcriptional regulator MraZ of Yersinia pseudotuberculosis serotype O:1b (strain IP 31758).